A 276-amino-acid chain; its full sequence is Nickel import system permease protein NikC (276 aa).

The next 5 helical transmembrane spans lie at 10–30 (LIFF…FFVS), 73–93 (LFVT…LGLF), 108–128 (FIDV…ASFF), 186–206 (IIPA…LYIS), and 238–258 (IMLI…NLTG). The 190-residue stretch at 69-258 (ARSTLFVTVL…ITILIFNLTG (190 aa)) folds into the ABC transmembrane type-1 domain.

Belongs to the binding-protein-dependent transport system permease family. OppBC subfamily. In terms of assembly, the complex is composed of two ATP-binding proteins (NikD and NikE), two transmembrane proteins (NikB and NikC) and a solute-binding protein (NikA).

The protein resides in the cell membrane. In terms of biological role, part of the ABC transporter complex NikABCDE (Opp2) involved in nickel import. Probably responsible for the translocation of the substrate across the membrane. This Staphylococcus aureus (strain USA300) protein is Nickel import system permease protein NikC.